A 543-amino-acid polypeptide reads, in one-letter code: Chaperonin GroEL 2 (543 aa).

Residues 29–32 (TLGP), 86–90 (DGTTT), Gly-413, and Asp-495 each bind ATP. The interval 524–543 (KPEPKENAPTGAGMGGDFDY) is disordered.

The protein belongs to the chaperonin (HSP60) family. Forms a cylinder of 14 subunits composed of two heptameric rings stacked back-to-back. Interacts with the co-chaperonin GroES.

It is found in the cytoplasm. The enzyme catalyses ATP + H2O + a folded polypeptide = ADP + phosphate + an unfolded polypeptide.. In terms of biological role, together with its co-chaperonin GroES, plays an essential role in assisting protein folding. The GroEL-GroES system forms a nano-cage that allows encapsulation of the non-native substrate proteins and provides a physical environment optimized to promote and accelerate protein folding. This chain is Chaperonin GroEL 2, found in Acaryochloris marina (strain MBIC 11017).